A 137-amino-acid polypeptide reads, in one-letter code: Methylglyoxal synthase (137 aa).

The region spanning 1–137 (MKIALIAHDK…NLVRGGEPNV (137 aa)) is the MGS-like domain. Residues His8, Lys12, 34–37 (TGTT), and 54–55 (SG) contribute to the substrate site. Asp60 (proton donor/acceptor) is an active-site residue. Residue His87 coordinates substrate.

The protein belongs to the methylglyoxal synthase family.

The catalysed reaction is dihydroxyacetone phosphate = methylglyoxal + phosphate. Its function is as follows. Catalyzes the formation of methylglyoxal from dihydroxyacetone phosphate. The polypeptide is Methylglyoxal synthase (Bacillus velezensis (strain DSM 23117 / BGSC 10A6 / LMG 26770 / FZB42) (Bacillus amyloliquefaciens subsp. plantarum)).